The following is a 315-amino-acid chain: Cysteine proteinase 2 (315 aa).

The first 13 residues, 1-13 (MFAFICLLAIASA), serve as a signal peptide directing secretion. Residues 14-93 (IDFNTWASKN…NGQVKYLNIQ (80 aa)) constitute a propeptide, activation peptide. 2 disulfides stabilise this stretch: cysteine 115–cysteine 161 and cysteine 152–cysteine 193. Cysteine 118 is an active-site residue. Catalysis depends on residues histidine 259 and asparagine 279.

It belongs to the peptidase C1 family. As to quaternary structure, interacts with cysteine protease inhibitor ICP1. Interacts with cysteine protease inhibitor ICP2.

The protein resides in the cell membrane. Its subcellular location is the cytoplasmic vesicle. It is found in the phagosome. The protein localises to the secreted. It catalyses the reaction Hydrolysis of proteins, including basement membrane collagen and azocasein. Preferential cleavage: Arg-Arg-|-Xaa in small molecule substrates including Z-Arg-Arg-|-NHMec.. Its activity is regulated as follows. Inhibited by cysteine protease inhibitors ICP1 and ICP2. Inhibited by leupeptin and such inhibitors of cysteine proteinases as L-transepoxysuccinyl-L-leucylamido-(4-guanidino)butane, peptidyldiazomethanes, iodoacetic acid and chicken cystatin. In terms of biological role, cysteine protease which degrades matrix proteins such as collagen, laminin and fibronectin and thus is involved in the destruction of human tissue. Can abolish adhesion. May play an important role in pathogenicity. This Entamoeba histolytica (strain ATCC 30459 / HM-1:IMSS / ABRM) protein is Cysteine proteinase 2.